Consider the following 320-residue polypeptide: Cytochrome f (320 aa).

Positions 1 to 35 are cleaved as a signal peptide; that stretch reads MQTRKTFSWIKEQIARSISVSLLIYIITRTSISSA. 4 residues coordinate heme: Tyr-36, Cys-56, Cys-59, and His-60. The helical transmembrane segment at 286-306 threads the bilayer; sequence VQGLLFFLASVILAQIFLVLK.

This sequence belongs to the cytochrome f family. As to quaternary structure, the 4 large subunits of the cytochrome b6-f complex are cytochrome b6, subunit IV (17 kDa polypeptide, petD), cytochrome f and the Rieske protein, while the 4 small subunits are PetG, PetL, PetM and PetN. The complex functions as a dimer. The cofactor is heme.

It localises to the plastid. The protein resides in the chloroplast thylakoid membrane. In terms of biological role, component of the cytochrome b6-f complex, which mediates electron transfer between photosystem II (PSII) and photosystem I (PSI), cyclic electron flow around PSI, and state transitions. The protein is Cytochrome f of Jasminum nudiflorum (Winter jasmine).